An 863-amino-acid polypeptide reads, in one-letter code: MSESHVKISRTIIRGTSPSTVRLESRVRELEDLLDLERDARVRAERNANEMSIQLDTMAERLDELSGTSSQTHDAIRRKDMEISKLRKDLENANAAFETAEATLRRKHNTMISEISSEVENLQKQKGRAEKDKSQLMLEIDNVLGQLDGALKAKASAESKLEGLDSQLTRLKALTDDLQRQMADANSAKSRLAAENFELVRVNQEYEAQVVTFSKTKAALESQLDDLKRAMDEDARNRLSLQTQLSSLQMDYDNLQARYEEEAEAAGNLRNQVAKFNADMAALKTRLERELMAKTEEFEELKRKLTVRITELEDMAEHERTRANNLEKTKVKLTLEIKDLQAENEALAAENGELTHRAKQAENLANELQRRIDEMTVEINTLNSANSALEADNMRLKGQVGDLTDRIANLDRENRQLGDQLKETKSALRDANRRLTDLEALRSQLEAERDNLASALHDAEEALKEMEAKYVASQNALNHLKSEMEQRLREKDEELENLRKSTTRTIEELTTTISEMEVRFKSDMSRLKKKYEATISELEVQLDVANKANVNLNRENKTLAQRVQELQAALEDERRAREAAESNLQVSERKRIALASEVEEIRSQLELSDRARKNAESELNDANGRISELTLSVNTLTNDKRRLEGDIGVMQGDLDEAVNARKAAEDRADRLNAEVLRLADELRQEQENYKRAETLRKQLEIEIREITVKLEEAEAFATREGRRMVQKLQNRVRELEAELDGEIRRAKEAFANARKYERQFKELQTQSEDDKRMILELQDLLDKTQIKMKAYKRQLEEQEEVSQLTMSKYRKAQQQIEEAEHRADMAERTITIKRTIGGPGSRAVSVVREINSVSRGNRATSIM.

A nonhelical region region spans residues 1 to 18 (MSESHVKISRTIIRGTSP). The stretch at 19–836 (STVRLESRVR…ERTITIKRTI (818 aa)) forms a coiled coil. The nonhelical region stretch occupies residues 837–863 (GGPGSRAVSVVREINSVSRGNRATSIM).

Belongs to the paramyosin family. In terms of assembly, homodimer or monomer in secreted form.

Its subcellular location is the cytoplasm. It is found in the myofibril. It localises to the secreted. Its function is as follows. Paramyosin is a major structural component of many thick filaments isolated from invertebrate muscles. It is a prominent antigen in human cysticercosis, may have a role as a modulator of the host immune response. It is able to bind collagen and has complement inhibitor activity. This chain is Paramyosin (PMY), found in Taenia solium (Pork tapeworm).